The sequence spans 780 residues: Pendrin (780 aa).

Residues 1 to 87 are Cytoplasmic-facing; sequence MAARDRRSEP…YRVKEWLLSD (87 aa). A helical membrane pass occupies residues 88 to 108; sequence IISGVSTGLVGTLQGMAYALL. Residue Ala-109 is a topological domain, extracellular. The helical transmembrane segment at 110–130 threads the bilayer; sequence AVPVQYGLYSAFFPILTYFVF. At 131–135 the chain is on the cytoplasmic side; that stretch reads GTSRH. Residues 136-156 form a helical membrane-spanning segment; it reads ISVGPFPVVSLMVGSVVLSMA. Residues 157–191 lie on the Extracellular side of the membrane; the sequence is PDDHFLVPSGNGSTLNTTTLDTGTRDAARVLLAST. The helical transmembrane segment at 192-212 threads the bilayer; sequence LTLLVGIIQLVFGGLQIGFIV. Residues 213–218 are Cytoplasmic-facing; that stretch reads RYLADP. Residues 219-239 traverse the membrane as a helical segment; that stretch reads LVGGFTTAAAFQVLVSQLKIV. Residues 240–263 lie on the Extracellular side of the membrane; sequence LNVSTKNYNGVLSIIYTLIEIFQN. Residues 264-284 form a helical membrane-spanning segment; the sequence is IGDTNIADFIAGLLTIIVCMA. Over 285-295 the chain is Cytoplasmic; it reads VKELNDRFKHK. Residues 296-316 traverse the membrane as a helical segment; that stretch reads IPVPIPIEVIVTIIATAISYG. Topologically, residues 317-344 are extracellular; sequence ANLEANYNAGIVKSIPSGFLPPVLPSVG. A helical membrane pass occupies residues 345–365; that stretch reads LFSDMLAASFSIAVVAYAIAV. Topologically, residues 366-384 are cytoplasmic; sequence SVGKVYATKHDYIIDGNQE. The chain crosses the membrane as a helical span at residues 385-405; that stretch reads FIAFGISNVFSGFFSCFVATT. Over 406–421 the chain is Extracellular; sequence ALSRTAVQESTGGKTQ. A helical membrane pass occupies residues 422-442; the sequence is VAGLISAVIVMVAIVALGKLL. The Cytoplasmic segment spans residues 443 to 448; that stretch reads EPLQKS. The chain crosses the membrane as a helical span at residues 449–469; the sequence is VLAAVVIANLKGMFMQVCDVP. Topologically, residues 470 to 486 are extracellular; that stretch reads RLWKQNKTDAVIWVFTC. The chain crosses the membrane as a helical span at residues 487–507; sequence IMSIILGLDLGLLAGLLFGLL. At 508–780 the chain is on the cytoplasmic side; sequence TVVLRVQFPS…QDEAMRRLAS (273 aa). The STAS domain occupies 535-729; that stretch reads HYKNLEEPEG…LTVHDAILYL (195 aa).

The protein belongs to the SLC26A/SulP transporter (TC 2.A.53) family. Highly expressed in the kidney (at protein level).

It is found in the cell membrane. The protein localises to the apical cell membrane. It catalyses the reaction chloride(in) = chloride(out). The enzyme catalyses iodide(out) = iodide(in). It carries out the reaction hydrogencarbonate(in) + chloride(out) = hydrogencarbonate(out) + chloride(in). The catalysed reaction is iodide(in) + hydrogencarbonate(out) = iodide(out) + hydrogencarbonate(in). It catalyses the reaction iodide(in) + chloride(out) = iodide(out) + chloride(in). The enzyme catalyses formate(in) + chloride(out) = formate(out) + chloride(in). Functionally, sodium-independent transporter of chloride and iodide. Mediates electroneutral chloride-bicarbonate and chloride-formate exchange with 1:1 stoichiometry. Mediates electroneutral iodide-chloride and iodide-bicarbonate exchange. This chain is Pendrin (Slc26a4), found in Rattus norvegicus (Rat).